The sequence spans 337 residues: GTPase Obg (337 aa).

One can recognise an Obg domain in the interval Met-1–Leu-161. The 172-residue stretch at Ala-162–Glu-333 folds into the OBG-type G domain. Residues Gly-168–Ser-175, Phe-193–Phe-197, Asp-214–Ser-217, Asn-282–Asp-285, and Ser-314–Asn-316 each bind GTP. 2 residues coordinate Mg(2+): Ser-175 and Thr-195.

It belongs to the TRAFAC class OBG-HflX-like GTPase superfamily. OBG GTPase family. Monomer. It depends on Mg(2+) as a cofactor.

Its subcellular location is the cytoplasm. Its function is as follows. An essential GTPase which binds GTP, GDP and possibly (p)ppGpp with moderate affinity, with high nucleotide exchange rates and a fairly low GTP hydrolysis rate. Plays a role in control of the cell cycle, stress response, ribosome biogenesis and in those bacteria that undergo differentiation, in morphogenesis control. This chain is GTPase Obg, found in Wigglesworthia glossinidia brevipalpis.